Reading from the N-terminus, the 274-residue chain is MDIKAFKMDGLGNDFVIIDQRSQDFNLDKDQIIKICDRSFIGCDQLILIKKNKEIDANVEFFNSDGSISGACGNGTRCVADLLSKESGKKEITLLTTSGSLKSKILGNNLVETEIGIPKVNWQEIPLSKQLDTQDLKIEIIDRNNTKHIGGIAINVGNPHIIFFVDDIEAFDLKNIGPKIENHPLFPEKCNVTLAKVINRNLIKVKVWERGAGLTKACGTAACATAVAANINNLVEKTTDIEFVLGSLTISIDERNSIHMKGPVSDIKNINIKL.

Substrate-binding residues include Asn-13, Gln-45, and Asn-63. The active-site Proton donor is the Cys-72. Residues 73 to 74 (GN), Asn-158, Asn-191, and 209 to 210 (ER) each bind substrate. Cys-218 functions as the Proton acceptor in the catalytic mechanism. A substrate-binding site is contributed by 219–220 (GT).

It belongs to the diaminopimelate epimerase family. Homodimer.

It is found in the cytoplasm. It catalyses the reaction (2S,6S)-2,6-diaminopimelate = meso-2,6-diaminopimelate. It participates in amino-acid biosynthesis; L-lysine biosynthesis via DAP pathway; DL-2,6-diaminopimelate from LL-2,6-diaminopimelate: step 1/1. Catalyzes the stereoinversion of LL-2,6-diaminopimelate (L,L-DAP) to meso-diaminopimelate (meso-DAP), a precursor of L-lysine and an essential component of the bacterial peptidoglycan. The sequence is that of Diaminopimelate epimerase from Pelagibacter ubique (strain HTCC1062).